Consider the following 180-residue polypeptide: Acireductone dioxygenase (180 aa).

Fe(2+)-binding residues include histidine 97, histidine 99, glutamate 103, and histidine 141. Residues histidine 97, histidine 99, glutamate 103, and histidine 141 each coordinate Ni(2+).

It belongs to the acireductone dioxygenase (ARD) family. In terms of assembly, monomer. It depends on Fe(2+) as a cofactor. Ni(2+) is required as a cofactor.

It catalyses the reaction 1,2-dihydroxy-5-(methylsulfanyl)pent-1-en-3-one + O2 = 3-(methylsulfanyl)propanoate + CO + formate + 2 H(+). The catalysed reaction is 1,2-dihydroxy-5-(methylsulfanyl)pent-1-en-3-one + O2 = 4-methylsulfanyl-2-oxobutanoate + formate + 2 H(+). It participates in amino-acid biosynthesis; L-methionine biosynthesis via salvage pathway; L-methionine from S-methyl-5-thio-alpha-D-ribose 1-phosphate: step 5/6. Its function is as follows. Catalyzes 2 different reactions between oxygen and the acireductone 1,2-dihydroxy-3-keto-5-methylthiopentene (DHK-MTPene) depending upon the metal bound in the active site. Fe-containing acireductone dioxygenase (Fe-ARD) produces formate and 2-keto-4-methylthiobutyrate (KMTB), the alpha-ketoacid precursor of methionine in the methionine recycle pathway. Ni-containing acireductone dioxygenase (Ni-ARD) produces methylthiopropionate, carbon monoxide and formate, and does not lie on the methionine recycle pathway. The sequence is that of Acireductone dioxygenase from Cronobacter sakazakii (strain ATCC BAA-894) (Enterobacter sakazakii).